The primary structure comprises 229 residues: MTNKIRAIFDRIAPVYDQLNDWLSLGQHRIWKEMAIKWTGAKPGDTCLDLCCGSGDLALRLARRVGSTGQVSGVDFSANLLETAKQRAQSQYPQPNISWVEANVLDLPFKDNQFDAATMGYGLRNVTDIPRSLQELHRVLKPNAKAAILDFHRPNNQQFRTFQQWYLDSIVVPLADRLGVKEEYAYISPSLDRFPIGKEQVEIALKVGFTSATHYPIANGMMGVLIISK.

Belongs to the class I-like SAM-binding methyltransferase superfamily. MenG/UbiE family.

The catalysed reaction is demethylphylloquinol + S-adenosyl-L-methionine = phylloquinol + S-adenosyl-L-homocysteine + H(+). The protein operates within cofactor biosynthesis; phylloquinone biosynthesis. Methyltransferase required for the conversion of 2-phytyl-1,4-beta-naphthoquinol to phylloquinol. This chain is 2-phytyl-1,4-naphtoquinone methyltransferase, found in Nostoc sp. (strain PCC 7120 / SAG 25.82 / UTEX 2576).